Reading from the N-terminus, the 177-residue chain is Alpha-crystallin A chain (177 aa).

Met-1 bears the N-acetylmethionine mark. Residues 52–162 enclose the sHSP domain; it reads VFRNFLDSGI…NWQDRPIPVS (111 aa). Zn(2+)-binding residues include His-100 and Glu-102. An intrachain disulfide couples Cys-131 to Cys-142. A disordered region spans residues 146–177; the sequence is TRPGDDSNWQDRPIPVSREEKQGTQPEIRADP. O-linked (GlcNAc) serine glycosylation occurs at Ser-162. A compositionally biased stretch (basic and acidic residues) spans 162 to 177; the sequence is SREEKQGTQPEIRADP.

Belongs to the small heat shock protein (HSP20) family. As to quaternary structure, heteropolymer composed of three CRYAA and one CRYAB subunits. Inter-subunit bridging via zinc ions enhances stability, which is crucial as there is no protein turn over in the lens. Can also form homodimers and homotetramers (dimers of dimers) which serve as the building blocks of homooligomers.

It localises to the cytoplasm. It is found in the nucleus. In terms of biological role, contributes to the transparency and refractive index of the lens. May act as a chaperone, preventing aggregation of various proteins under a wide range of stress conditions. The protein is Alpha-crystallin A chain (cryaa) of Squalus acanthias (Spiny dogfish).